A 150-amino-acid chain; its full sequence is D-aminoacyl-tRNA deacylase (150 aa).

The Gly-cisPro motif, important for rejection of L-amino acids signature appears at 137-138 (GP).

Belongs to the DTD family. Homodimer.

The protein resides in the cytoplasm. It catalyses the reaction glycyl-tRNA(Ala) + H2O = tRNA(Ala) + glycine + H(+). The enzyme catalyses a D-aminoacyl-tRNA + H2O = a tRNA + a D-alpha-amino acid + H(+). Functionally, an aminoacyl-tRNA editing enzyme that deacylates mischarged D-aminoacyl-tRNAs. Also deacylates mischarged glycyl-tRNA(Ala), protecting cells against glycine mischarging by AlaRS. Acts via tRNA-based rather than protein-based catalysis; rejects L-amino acids rather than detecting D-amino acids in the active site. By recycling D-aminoacyl-tRNA to D-amino acids and free tRNA molecules, this enzyme counteracts the toxicity associated with the formation of D-aminoacyl-tRNA entities in vivo and helps enforce protein L-homochirality. The polypeptide is D-aminoacyl-tRNA deacylase (Listeria innocua serovar 6a (strain ATCC BAA-680 / CLIP 11262)).